The following is a 371-amino-acid chain: 4-hydroxy-3-methylbut-2-en-1-yl diphosphate synthase (flavodoxin) (371 aa).

Residues cysteine 271, cysteine 274, cysteine 306, and glutamate 313 each contribute to the [4Fe-4S] cluster site.

This sequence belongs to the IspG family. The cofactor is [4Fe-4S] cluster.

The enzyme catalyses (2E)-4-hydroxy-3-methylbut-2-enyl diphosphate + oxidized [flavodoxin] + H2O + 2 H(+) = 2-C-methyl-D-erythritol 2,4-cyclic diphosphate + reduced [flavodoxin]. The protein operates within isoprenoid biosynthesis; isopentenyl diphosphate biosynthesis via DXP pathway; isopentenyl diphosphate from 1-deoxy-D-xylulose 5-phosphate: step 5/6. Converts 2C-methyl-D-erythritol 2,4-cyclodiphosphate (ME-2,4cPP) into 1-hydroxy-2-methyl-2-(E)-butenyl 4-diphosphate. The protein is 4-hydroxy-3-methylbut-2-en-1-yl diphosphate synthase (flavodoxin) of Actinobacillus succinogenes (strain ATCC 55618 / DSM 22257 / CCUG 43843 / 130Z).